Reading from the N-terminus, the 184-residue chain is Luciferin-binding protein (184 aa).

EF-hand domains are found at residues 10-45 (YHLR…IAKI), 46-81 (AKLS…EEAA), 98-133 (MAVI…VGPD), and 134-169 (ITDD…FLFG). The Ca(2+) site is built by aspartate 111, aspartate 113, aspartate 115, tyrosine 117, glutamate 122, aspartate 147, asparagine 149, asparagine 151, glutamine 153, and glutamate 158.

This Ca(2+)-dependent protein binds to luciferin. The luciferin of LBP is capable of reacting with luciferase and O(2) only when calcium is bound. In Renilla reniformis (Sea pansy), this protein is Luciferin-binding protein.